We begin with the raw amino-acid sequence, 298 residues long: ADP/ATP translocase 1 (298 aa).

Residues 1 to 7 lie on the Mitochondrial intermembrane side of the membrane; that stretch reads MGDHAWS. At glycine 2 the chain carries N-acetylglycine. Residues 6–98 form a Solcar 1 repeat; the sequence is WSFLKDFLAG…FAFKDKYKQL (93 aa). At serine 7 the chain carries Phosphoserine. A helical membrane pass occupies residues 8–37; sequence FLKDFLAGGVAAAVSKTAVAPIERVKLLLQ. The Mitochondrial matrix portion of the chain corresponds to 38 to 74; that stretch reads VQHASKQISAEKQYKGIIDCVVRIPKEQGFLSFWRGN. The residue at position 52 (lysine 52) is an N6,N6,N6-trimethyllysine. The chain crosses the membrane as a helical span at residues 75 to 99; the sequence is LANVIRYFPTQALNFAFKDKYKQLF. The ADP site is built by arginine 80 and lysine 92. The Mitochondrial intermembrane portion of the chain corresponds to 100-109; the sequence is LGGVDRHKQF. The helical transmembrane segment at 110–130 threads the bilayer; sequence WRYFAGNLASGGAAGATSLCF. Solcar repeat units follow at residues 111 to 201 and 212 to 297; these read RYFA…AKGM and VSWM…IKKY. Topologically, residues 131–178 are mitochondrial matrix; the sequence is VYPLDFARTRLAADVGKGAAQREFHGLGDCIIKIFKSDGLRGLYQGFN. Lysine 147 is modified (N6-succinyllysine). Cysteine 160 carries the post-translational modification S-nitrosocysteine. A helical transmembrane segment spans residues 179-199; sequence VSVQGIIIYRAAYFGVYDTAK. The Mitochondrial intermembrane segment spans residues 200–210; it reads GMLPDPKNVHI. Residues 211–231 traverse the membrane as a helical segment; sequence FVSWMIAQSVTAVAGLVSYPF. The Mitochondrial matrix segment spans residues 232-273; that stretch reads DTVRRRMMMQSGRKGADIMYTGTVDCWRKIAKDEGAKAFFKG. Arginine 235 is a binding site for ADP. Residues 235 to 240 form an important for transport activity region; that stretch reads RRRMMM. Residues 235–240 carry the Nucleotide carrier signature motif motif; sequence RRRMMM. Lysine 245 and lysine 272 each carry N6-succinyllysine. Residues 274–291 traverse the membrane as a helical segment; it reads AWSNVLRGMGGAFVLVLY. Residues 292 to 298 are Mitochondrial intermembrane-facing; that stretch reads DEIKKYV.

Belongs to the mitochondrial carrier (TC 2.A.29) family. As to quaternary structure, monomer. Found in a complex with ARL2, ARL2BP and SLC25A4/ANT1. Interacts with ARL2BP. Interacts with ARHGAP11B, thereby inhibiting the mitochondrial permeability transition pore (mPTP). Interacts with TIMM44; leading to inhibit the presequence translocase TIMM23, thereby promoting stabilization of PINK1. (Microbial infection) Interacts with HIV-1 Vpr. Under cell death induction, transglutaminated by TGM2. Transglutamination leads to formation of covalent cross-links between a glutamine and the epsilon-amino group of a lysine residue, forming polymers. In terms of tissue distribution, expressed in erythrocytes (at protein level).

Its subcellular location is the mitochondrion inner membrane. It is found in the membrane. It carries out the reaction ADP(in) + ATP(out) = ADP(out) + ATP(in). The catalysed reaction is H(+)(in) = H(+)(out). The matrix-open state (m-state) is inhibited by the membrane-permeable bongkrekic acid (BKA). The cytoplasmic-open state (c-state) is inhibited by the membrane-impermeable toxic inhibitor carboxyatractyloside (CATR). Proton transporter activity is inhibited by ADP:ATP antiporter activity. ADP:ATP antiporter that mediates import of ADP into the mitochondrial matrix for ATP synthesis, and export of ATP out to fuel the cell. Cycles between the cytoplasmic-open state (c-state) and the matrix-open state (m-state): operates by the alternating access mechanism with a single substrate-binding site intermittently exposed to either the cytosolic (c-state) or matrix (m-state) side of the inner mitochondrial membrane. In addition to its ADP:ATP antiporter activity, also involved in mitochondrial uncoupling and mitochondrial permeability transition pore (mPTP) activity. Plays a role in mitochondrial uncoupling by acting as a proton transporter: proton transport uncouples the proton flows via the electron transport chain and ATP synthase to reduce the efficiency of ATP production and cause mitochondrial thermogenesis. Proton transporter activity is inhibited by ADP:ATP antiporter activity, suggesting that SLC25A4/ANT1 acts as a master regulator of mitochondrial energy output by maintaining a delicate balance between ATP production (ADP:ATP antiporter activity) and thermogenesis (proton transporter activity). Proton transporter activity requires free fatty acids as cofactor, but does not transport it. Also plays a key role in mPTP opening, a non-specific pore that enables free passage of the mitochondrial membranes to solutes of up to 1.5 kDa, and which contributes to cell death. It is however unclear if SLC25A4/ANT1 constitutes a pore-forming component of mPTP or regulates it. Acts as a regulator of mitophagy independently of ADP:ATP antiporter activity: promotes mitophagy via interaction with TIMM44, leading to inhibit the presequence translocase TIMM23, thereby promoting stabilization of PINK1. This is ADP/ATP translocase 1 from Homo sapiens (Human).